The primary structure comprises 414 residues: Serine/threonine transporter SstT (414 aa).

A run of 9 helical transmembrane segments spans residues 19 to 39 (IIVGLVLGVVTALISPDLEPV), 55 to 75 (FVKGLRAVAPILIFVLVIAAI), 89 to 109 (IVMLYIIGTFGASIVAVLASF), 148 to 168 (ALATSNFIGILAWAIALGIAL), 189 to 209 (IVHLVISLAPFGIFGLVAATL), 223 to 243 (LLLVLLGSMLFMALVVNPFIV), 297 to 317 (IPLGATINMAGAAITVTVLTL), 323 to 343 (LGIPVSIPTAILLSVVSAVCA), and 363 to 383 (LFGISGDVAAQVIAVGFVIGV).

Belongs to the dicarboxylate/amino acid:cation symporter (DAACS) (TC 2.A.23) family.

The protein resides in the cell inner membrane. The catalysed reaction is L-serine(in) + Na(+)(in) = L-serine(out) + Na(+)(out). It catalyses the reaction L-threonine(in) + Na(+)(in) = L-threonine(out) + Na(+)(out). In terms of biological role, involved in the import of serine and threonine into the cell, with the concomitant import of sodium (symport system). The protein is Serine/threonine transporter SstT of Actinobacillus succinogenes (strain ATCC 55618 / DSM 22257 / CCUG 43843 / 130Z).